Reading from the N-terminus, the 327-residue chain is Phenylalanine--tRNA ligase alpha subunit (327 aa).

E252 lines the Mg(2+) pocket.

This sequence belongs to the class-II aminoacyl-tRNA synthetase family. Phe-tRNA synthetase alpha subunit type 1 subfamily. In terms of assembly, tetramer of two alpha and two beta subunits. It depends on Mg(2+) as a cofactor.

It localises to the cytoplasm. The enzyme catalyses tRNA(Phe) + L-phenylalanine + ATP = L-phenylalanyl-tRNA(Phe) + AMP + diphosphate + H(+). The protein is Phenylalanine--tRNA ligase alpha subunit of Shewanella amazonensis (strain ATCC BAA-1098 / SB2B).